Here is a 418-residue protein sequence, read N- to C-terminus: UDP-N-acetylglucosamine 1-carboxyvinyltransferase (418 aa).

Lys22–Asn23 contacts phosphoenolpyruvate. Residue Arg93 coordinates UDP-N-acetyl-alpha-D-glucosamine. The active-site Proton donor is the Cys117. Residue Cys117 is modified to 2-(S-cysteinyl)pyruvic acid O-phosphothioketal. The UDP-N-acetyl-alpha-D-glucosamine site is built by Asp305 and Val327.

It belongs to the EPSP synthase family. MurA subfamily.

The protein resides in the cytoplasm. It carries out the reaction phosphoenolpyruvate + UDP-N-acetyl-alpha-D-glucosamine = UDP-N-acetyl-3-O-(1-carboxyvinyl)-alpha-D-glucosamine + phosphate. The protein operates within cell wall biogenesis; peptidoglycan biosynthesis. Cell wall formation. Adds enolpyruvyl to UDP-N-acetylglucosamine. In Alkalilimnicola ehrlichii (strain ATCC BAA-1101 / DSM 17681 / MLHE-1), this protein is UDP-N-acetylglucosamine 1-carboxyvinyltransferase.